A 115-amino-acid polypeptide reads, in one-letter code: Somatostatin-1 (115 aa).

The N-terminal stretch at 1 to 24 (MQSCRVQCALTLLSLALAINSISA) is a signal peptide. Residues 25–99 (APTDPRLRQF…NSSPALAPRE (75 aa)) constitute a propeptide that is removed on maturation. Residues 60-79 (SQTDNEALESDDLPRGAEQD) are disordered. A disulfide bridge links C104 with C115.

Belongs to the somatostatin family.

The protein resides in the secreted. Somatostatin inhibits the release of somatotropin. This is Somatostatin-1 (sst1) from Pelophylax ridibundus (Marsh frog).